We begin with the raw amino-acid sequence, 327 residues long: Movement protein (327 aa).

A coiled-coil region spans residues 297–327 (IASSSSTENELARVSQNIDLLKNKLKEICGE).

It belongs to the caulimoviridae movement protein family. As to quaternary structure, homotrimer, through the coiled-coil domain. Interacts with VAP. May interact (via N-terminus) with host prenylated Rab acceptor protein 1D (PRA1D).

Its subcellular location is the host cell junction. It localises to the host plasmodesma. In terms of biological role, transports viral genome to neighboring plant cells directly through plasmosdesmata, without any budding. The movement protein allows efficient cell to cell propagation, by bypassing the host cell wall barrier. Acts by forming tubules structures that increase the size exclusion limit (SEL) of plasmodesmata, thereby allowing viral ribonucleocapsids to spread directly to neighboring cells. This is Movement protein from Cauliflower mosaic virus (strain D/H) (CaMV).